Reading from the N-terminus, the 577-residue chain is Proline--tRNA ligase (577 aa).

This sequence belongs to the class-II aminoacyl-tRNA synthetase family. ProS type 1 subfamily. In terms of assembly, homodimer.

It is found in the cytoplasm. It carries out the reaction tRNA(Pro) + L-proline + ATP = L-prolyl-tRNA(Pro) + AMP + diphosphate. Catalyzes the attachment of proline to tRNA(Pro) in a two-step reaction: proline is first activated by ATP to form Pro-AMP and then transferred to the acceptor end of tRNA(Pro). As ProRS can inadvertently accommodate and process non-cognate amino acids such as alanine and cysteine, to avoid such errors it has two additional distinct editing activities against alanine. One activity is designated as 'pretransfer' editing and involves the tRNA(Pro)-independent hydrolysis of activated Ala-AMP. The other activity is designated 'posttransfer' editing and involves deacylation of mischarged Ala-tRNA(Pro). The misacylated Cys-tRNA(Pro) is not edited by ProRS. The chain is Proline--tRNA ligase from Janthinobacterium sp. (strain Marseille) (Minibacterium massiliensis).